The chain runs to 424 residues: Kynureninase (424 aa).

Pyridoxal 5'-phosphate contacts are provided by residues Leu105, Ser106, 133 to 136, Asp218, His221, and Tyr243; that span reads FPTD. Lys244 is modified (N6-(pyridoxal phosphate)lysine). The pyridoxal 5'-phosphate site is built by Trp274 and Asn302.

Belongs to the kynureninase family. As to quaternary structure, homodimer. Pyridoxal 5'-phosphate serves as cofactor.

It catalyses the reaction L-kynurenine + H2O = anthranilate + L-alanine + H(+). It carries out the reaction 3-hydroxy-L-kynurenine + H2O = 3-hydroxyanthranilate + L-alanine + H(+). The protein operates within amino-acid degradation; L-kynurenine degradation; L-alanine and anthranilate from L-kynurenine: step 1/1. Its pathway is cofactor biosynthesis; NAD(+) biosynthesis; quinolinate from L-kynurenine: step 2/3. Its function is as follows. Catalyzes the cleavage of L-kynurenine (L-Kyn) and L-3-hydroxykynurenine (L-3OHKyn) into anthranilic acid (AA) and 3-hydroxyanthranilic acid (3-OHAA), respectively. The polypeptide is Kynureninase (Stenotrophomonas maltophilia (strain K279a)).